Consider the following 320-residue polypeptide: Mechanosensory protein 3 (320 aa).

2 LIM zinc-binding domains span residues 29–79 and 89–145; these read CNCC…CSQH and CAGC…CMTH. Residues 216-275 constitute a DNA-binding region (homeobox); sequence RRGPRTTIKQNQLDVLNEMFSNTPKPSKHARAKKALETGLSMRVIQVWFQNRRSKERRLK.

It is found in the nucleus. Its function is as follows. Specifies differentiation of the set of six touch receptor neurons. Binds cooperatively as a heterodimer with unc-86 to sites in the mec-3 gene promoter. In Caenorhabditis remanei (Caenorhabditis vulgaris), this protein is Mechanosensory protein 3 (mec-3).